Reading from the N-terminus, the 36-residue chain is Photosystem I reaction center subunit VIII (36 aa).

A helical transmembrane segment spans residues 9 to 29; it reads ILTPVVTLVFPGLMFALFFVL.

The protein belongs to the PsaI family.

It localises to the plastid. Its subcellular location is the chloroplast thylakoid membrane. May help in the organization of the PsaL subunit. This chain is Photosystem I reaction center subunit VIII, found in Emiliania huxleyi (Coccolithophore).